Here is a 99-residue protein sequence, read N- to C-terminus: Protein translation factor SUI1 homolog (99 aa).

This sequence belongs to the SUI1 family.

The chain is Protein translation factor SUI1 homolog from Sulfolobus acidocaldarius (strain ATCC 33909 / DSM 639 / JCM 8929 / NBRC 15157 / NCIMB 11770).